Consider the following 126-residue polypeptide: Protein ApaG (126 aa).

Residues 2–126 (SFPIDSIKIK…FRLAMPGVMQ (125 aa)) enclose the ApaG domain.

This chain is Protein ApaG, found in Shewanella denitrificans (strain OS217 / ATCC BAA-1090 / DSM 15013).